The sequence spans 45 residues: DNA replication protein repEB (45 aa).

Its function is as follows. Involved in T4 DNA replication. Important for the priming of leading strand DNA synthesis at oriE. Binds to ssDNA. The chain is DNA replication protein repEB (repEB) from Enterobacteria phage T4 (Bacteriophage T4).